Reading from the N-terminus, the 274-residue chain is 2,3,4,5-tetrahydropyridine-2,6-dicarboxylate N-succinyltransferase (274 aa).

Substrate is bound by residues Arg103 and Asp140.

Belongs to the transferase hexapeptide repeat family. Homotrimer.

It is found in the cytoplasm. The enzyme catalyses (S)-2,3,4,5-tetrahydrodipicolinate + succinyl-CoA + H2O = (S)-2-succinylamino-6-oxoheptanedioate + CoA. It functions in the pathway amino-acid biosynthesis; L-lysine biosynthesis via DAP pathway; LL-2,6-diaminopimelate from (S)-tetrahydrodipicolinate (succinylase route): step 1/3. This Haemophilus ducreyi (strain 35000HP / ATCC 700724) protein is 2,3,4,5-tetrahydropyridine-2,6-dicarboxylate N-succinyltransferase.